A 666-amino-acid polypeptide reads, in one-letter code: DNA-directed RNA polymerase subunit beta' (666 aa).

Positions 69, 71, 87, and 90 each coordinate Zn(2+). Mg(2+) contacts are provided by Asp-489, Asp-491, and Asp-493.

Belongs to the RNA polymerase beta' chain family. RpoC1 subfamily. In plastids the minimal PEP RNA polymerase catalytic core is composed of four subunits: alpha, beta, beta', and beta''. When a (nuclear-encoded) sigma factor is associated with the core the holoenzyme is formed, which can initiate transcription. It depends on Mg(2+) as a cofactor. The cofactor is Zn(2+).

The protein resides in the plastid. It localises to the chloroplast. It catalyses the reaction RNA(n) + a ribonucleoside 5'-triphosphate = RNA(n+1) + diphosphate. Functionally, DNA-dependent RNA polymerase catalyzes the transcription of DNA into RNA using the four ribonucleoside triphosphates as substrates. This chain is DNA-directed RNA polymerase subunit beta', found in Chara vulgaris (Common stonewort).